A 299-amino-acid chain; its full sequence is Circadian clock oscillator protein KaiA (299 aa).

Residues 9 to 148 form a psR domain, binds oxidized quinones region; the sequence is SRPQIFICTL…LQLSKACRLP (140 aa). Residues 9 to 179 form the KaiA N-terminal domain; the sequence is SRPQIFICTL…RLSQKLKERL (171 aa). Residues 180 to 188 are flexible linker; that stretch reads GYLGVYYKR. The KaiA C-terminal domain occupies 189–297; that stretch reads NPQQFFHKLT…CEMYRRSIPK (109 aa).

As to quaternary structure, homodimer. The KaiABC complex composition changes during the circadian cycle to control KaiC phosphorylation. Complexes KaiC(6), KaiA(2-4):KaiC(6), KaiB(6):KaiC(6) and KaiC(6):KaiB(6):KaiA(12) are among the most important forms, many form cooperatively. KaiA and CikA bind to the same region of the KaiB(fs) form and therefore compete.

Key component of the KaiABC oscillator complex, which constitutes the main circadian regulator in cyanobacteria. Complex composition changes during the circadian cycle to control KaiC phosphorylation. KaiA stimulates KaiC autophosphorylation, while KaiB sequesters KaiA, leading to KaiC autodephosphorylation. KaiA binding to the KaiC CII domain during the subjective day yields KaiA(2-4):KaiC(6) complexes which stimulate KaiC autophosphorylation. Phospho-Ser-431 KaiC accumulation triggers binding of KaiB during the subjective night to form the KaiB(6):KaiC(6) complex, leading to changes in the output regulators CikA and SasA. KaiB(6):KaiC(6) formation exposes a site for KaiA binding on KaiB that sequesters KaiA from KaiC's CII domain, making the KaiC(6):KaiB(6):KaiA(12) complex resulting in KaiC autodephosphorylation. Complete dephosphorylation of KaiC leads to dissociation of KaiA(2):KaiB(1), completing 1 cycle of the Kai oscillator. In terms of biological role, binds oxidized quinones via the N-terminal PsR domain, allowing it to sense redox changes and possibly mediate clock input. This is Circadian clock oscillator protein KaiA from Acaryochloris marina (strain MBIC 11017).